The following is a 114-amino-acid chain: MSDETALPLQFTEAAASKVKVLIADEENPDLKLRVYITGGGCSGFQYGFTFDDKVNDGDMTIEKQGVALVVDPMSLQYLVGGSVDYTEGLEGSRFVVTNPNAKTTCGCGSSFSV.

Cysteine 42, cysteine 106, and cysteine 108 together coordinate iron-sulfur cluster.

Belongs to the HesB/IscA family. In terms of assembly, homodimer. Iron-sulfur cluster is required as a cofactor.

In terms of biological role, required for insertion of 4Fe-4S clusters for at least IspG. This is Iron-sulfur cluster insertion protein ErpA from Serratia proteamaculans (strain 568).